The chain runs to 274 residues: Rhamnulose-1-phosphate aldolase (274 aa).

Residue E117 is part of the active site. Zn(2+)-binding residues include H141, H143, and H212.

The protein belongs to the aldolase class II family. RhaD subfamily. As to quaternary structure, homotetramer. Requires Zn(2+) as cofactor.

Its subcellular location is the cytoplasm. It carries out the reaction L-rhamnulose 1-phosphate = (S)-lactaldehyde + dihydroxyacetone phosphate. Its pathway is carbohydrate degradation; L-rhamnose degradation; glycerone phosphate from L-rhamnose: step 3/3. In terms of biological role, catalyzes the reversible cleavage of L-rhamnulose-1-phosphate to dihydroxyacetone phosphate (DHAP) and L-lactaldehyde. In Escherichia coli O81 (strain ED1a), this protein is Rhamnulose-1-phosphate aldolase.